Here is a 201-residue protein sequence, read N- to C-terminus: Large ribosomal subunit protein uL4 (201 aa).

Residues 44-68 (KAQKTRSEVAGTTKKSKKQKGGGAR) are disordered.

This sequence belongs to the universal ribosomal protein uL4 family. Part of the 50S ribosomal subunit.

In terms of biological role, one of the primary rRNA binding proteins, this protein initially binds near the 5'-end of the 23S rRNA. It is important during the early stages of 50S assembly. It makes multiple contacts with different domains of the 23S rRNA in the assembled 50S subunit and ribosome. Forms part of the polypeptide exit tunnel. This chain is Large ribosomal subunit protein uL4, found in Xanthomonas campestris pv. campestris (strain 8004).